We begin with the raw amino-acid sequence, 122 residues long: Cytochrome c3 hydrogenase large chain (122 aa).

Fe cation serves as cofactor.

It carries out the reaction 2 Fe(III)-[cytochrome c3] + H2 = 2 Fe(II)-[cytochrome c3] + 2 H(+). The sequence is that of Cytochrome c3 hydrogenase large chain (hoxG) from Acidithiobacillus ferrooxidans (Thiobacillus ferrooxidans).